Reading from the N-terminus, the 224-residue chain is Small ribosomal subunit protein uS13 (224 aa).

The span at 1-17 (MSEKTDKTEKKQKKAEE) shows a compositional bias: basic and acidic residues. 2 disordered regions span residues 1 to 64 (MSEK…AEEK) and 184 to 224 (HERG…EDKK). Composition is skewed to low complexity over residues 20–30 (ETASAEAAPAK) and 38–47 (AKPAEGAPAD). A compositionally biased stretch (basic and acidic residues) spans 210–224 (KKGEQGGAAKKEDKK).

This sequence belongs to the universal ribosomal protein uS13 family. As to quaternary structure, part of the 30S ribosomal subunit. Forms a loose heterodimer with protein S19. Forms two bridges to the 50S subunit in the 70S ribosome.

Located at the top of the head of the 30S subunit, it contacts several helices of the 16S rRNA. In the 70S ribosome it contacts the 23S rRNA (bridge B1a) and protein L5 of the 50S subunit (bridge B1b), connecting the 2 subunits; these bridges are implicated in subunit movement. The chain is Small ribosomal subunit protein uS13 from Methanocella arvoryzae (strain DSM 22066 / NBRC 105507 / MRE50).